We begin with the raw amino-acid sequence, 295 residues long: Small ribosomal subunit protein uS2 (295 aa).

The interval 263-295 (KKFSKTKNIDEETNTEFEKALNDADENKNSDNA) is disordered. Residues 278–295 (EFEKALNDADENKNSDNA) are compositionally biased toward basic and acidic residues.

It belongs to the universal ribosomal protein uS2 family.

In Rickettsia peacockii (strain Rustic), this protein is Small ribosomal subunit protein uS2.